We begin with the raw amino-acid sequence, 402 residues long: 26S proteasome regulatory subunit 8 (402 aa).

Position 186-193 (186-193 (GPPGTGKT)) interacts with ATP.

It belongs to the AAA ATPase family.

It is found in the cytoplasm. Its subcellular location is the nucleus. Its function is as follows. The 26S proteasome is involved in the ATP-dependent degradation of ubiquitinated proteins. The regulatory (or ATPase) complex confers ATP dependency and substrate specificity to the 26S complex. This is 26S proteasome regulatory subunit 8 from Manduca sexta (Tobacco hawkmoth).